The chain runs to 71 residues: MRKAFYTWLMAQRNSTSNKPAALLADLVFEDTTFPKHTDDFETISRYLEEEASFSFNLGQFDQIWEDYLSH.

This sequence belongs to the UPF0346 family.

The sequence is that of UPF0346 protein SZO_05010 from Streptococcus equi subsp. zooepidemicus (strain H70).